A 212-amino-acid polypeptide reads, in one-letter code: Ribonuclease HII (212 aa).

The RNase H type-2 domain occupies Arg17–Thr206. Asp23, Glu24, and Asp115 together coordinate a divalent metal cation.

It belongs to the RNase HII family. Mn(2+) is required as a cofactor. Requires Mg(2+) as cofactor.

It localises to the cytoplasm. It catalyses the reaction Endonucleolytic cleavage to 5'-phosphomonoester.. Endonuclease that specifically degrades the RNA of RNA-DNA hybrids. The chain is Ribonuclease HII from Syntrophus aciditrophicus (strain SB).